The primary structure comprises 876 residues: DNA gyrase subunit A (876 aa).

Positions 34–532 (LPDVRDGLKP…NSVDINIEDL (499 aa)) constitute a Topo IIA-type catalytic domain. Tyr122 acts as the O-(5'-phospho-DNA)-tyrosine intermediate in catalysis. The GyrA-box signature appears at 559–565 (QRRGGKG). The tract at residues 844–876 (DEELDAIDGSAAEGDEDIAPEADTDDDIAEDEE) is disordered. Residues 856–876 (EGDEDIAPEADTDDDIAEDEE) show a composition bias toward acidic residues.

It belongs to the type II topoisomerase GyrA/ParC subunit family. Heterotetramer, composed of two GyrA and two GyrB chains. In the heterotetramer, GyrA contains the active site tyrosine that forms a transient covalent intermediate with DNA, while GyrB binds cofactors and catalyzes ATP hydrolysis.

The protein localises to the cytoplasm. It catalyses the reaction ATP-dependent breakage, passage and rejoining of double-stranded DNA.. In terms of biological role, a type II topoisomerase that negatively supercoils closed circular double-stranded (ds) DNA in an ATP-dependent manner to modulate DNA topology and maintain chromosomes in an underwound state. Negative supercoiling favors strand separation, and DNA replication, transcription, recombination and repair, all of which involve strand separation. Also able to catalyze the interconversion of other topological isomers of dsDNA rings, including catenanes and knotted rings. Type II topoisomerases break and join 2 DNA strands simultaneously in an ATP-dependent manner. In Klebsiella oxytoca, this protein is DNA gyrase subunit A.